The sequence spans 349 residues: N-acetyltaurine hydrolase (349 aa).

The a divalent metal cation site is built by His-26, His-28, Glu-169, His-201, His-230, and Asp-298.

This sequence belongs to the metallo-dependent hydrolases superfamily. Phosphotriesterase family. Requires a divalent metal cation as cofactor.

The protein resides in the cytoplasm. It is found in the cytosol. It catalyses the reaction N-acetyltaurine + H2O = taurine + acetate. It carries out the reaction N-propanoyltaurine + H2O = propanoate + taurine. The enzyme catalyses N-acetyl-L-methionine + H2O = L-methionine + acetate. The catalysed reaction is N-acetyl-L-isoleucine + H2O = L-isoleucine + acetate. It catalyses the reaction N-acetyl-L-leucine + H2O = L-leucine + acetate. It carries out the reaction N-acetyl-L-valine + H2O = L-valine + acetate. In terms of biological role, N-acetyltaurine hydrolase that catalyzes the hydrolysis of N-acetyltaurine into taurine and acetate. PTER also acts on other N-acetyl amino acids (Met, Ile, Leu, Val) and N-propionyltaurine, but at lower rates. The sequence is that of N-acetyltaurine hydrolase (pter) from Tetraodon nigroviridis (Spotted green pufferfish).